The sequence spans 287 residues: Phosphatidylserine decarboxylase proenzyme (287 aa).

Catalysis depends on charge relay system; for autoendoproteolytic cleavage activity residues Asp-90, His-147, and Ser-253. The Schiff-base intermediate with substrate; via pyruvic acid; for decarboxylase activity role is filled by Ser-253. Ser-253 is subject to Pyruvic acid (Ser); by autocatalysis.

Belongs to the phosphatidylserine decarboxylase family. PSD-B subfamily. Prokaryotic type I sub-subfamily. Heterodimer of a large membrane-associated beta subunit and a small pyruvoyl-containing alpha subunit. The cofactor is pyruvate. In terms of processing, is synthesized initially as an inactive proenzyme. Formation of the active enzyme involves a self-maturation process in which the active site pyruvoyl group is generated from an internal serine residue via an autocatalytic post-translational modification. Two non-identical subunits are generated from the proenzyme in this reaction, and the pyruvate is formed at the N-terminus of the alpha chain, which is derived from the carboxyl end of the proenzyme. The autoendoproteolytic cleavage occurs by a canonical serine protease mechanism, in which the side chain hydroxyl group of the serine supplies its oxygen atom to form the C-terminus of the beta chain, while the remainder of the serine residue undergoes an oxidative deamination to produce ammonia and the pyruvoyl prosthetic group on the alpha chain. During this reaction, the Ser that is part of the protease active site of the proenzyme becomes the pyruvoyl prosthetic group, which constitutes an essential element of the active site of the mature decarboxylase.

The protein localises to the cell membrane. The catalysed reaction is a 1,2-diacyl-sn-glycero-3-phospho-L-serine + H(+) = a 1,2-diacyl-sn-glycero-3-phosphoethanolamine + CO2. It functions in the pathway phospholipid metabolism; phosphatidylethanolamine biosynthesis; phosphatidylethanolamine from CDP-diacylglycerol: step 2/2. Its function is as follows. Catalyzes the formation of phosphatidylethanolamine (PtdEtn) from phosphatidylserine (PtdSer). The protein is Phosphatidylserine decarboxylase proenzyme of Aliivibrio fischeri (strain ATCC 700601 / ES114) (Vibrio fischeri).